We begin with the raw amino-acid sequence, 164 residues long: Nucleotide-binding protein Daro_3028 (164 aa).

It belongs to the YajQ family.

Nucleotide-binding protein. The chain is Nucleotide-binding protein Daro_3028 from Dechloromonas aromatica (strain RCB).